Reading from the N-terminus, the 114-residue chain is Aspartate 1-decarboxylase (114 aa).

Catalysis depends on Ser-25, which acts as the Schiff-base intermediate with substrate; via pyruvic acid. A Pyruvic acid (Ser) modification is found at Ser-25. Thr-57 contacts substrate. The Proton donor role is filled by Tyr-58. 71-73 (GAA) contacts substrate.

The protein belongs to the PanD family. Heterooctamer of four alpha and four beta subunits. Pyruvate serves as cofactor. Post-translationally, is synthesized initially as an inactive proenzyme, which is activated by self-cleavage at a specific serine bond to produce a beta-subunit with a hydroxyl group at its C-terminus and an alpha-subunit with a pyruvoyl group at its N-terminus.

It is found in the cytoplasm. The catalysed reaction is L-aspartate + H(+) = beta-alanine + CO2. It functions in the pathway cofactor biosynthesis; (R)-pantothenate biosynthesis; beta-alanine from L-aspartate: step 1/1. In terms of biological role, catalyzes the pyruvoyl-dependent decarboxylation of aspartate to produce beta-alanine. The protein is Aspartate 1-decarboxylase of Haloquadratum walsbyi (strain DSM 16790 / HBSQ001).